Reading from the N-terminus, the 453-residue chain is UDP-N-acetylmuramoylalanine--D-glutamate ligase (453 aa).

Glycine 119 to threonine 125 is a binding site for ATP.

It belongs to the MurCDEF family.

It localises to the cytoplasm. The catalysed reaction is UDP-N-acetyl-alpha-D-muramoyl-L-alanine + D-glutamate + ATP = UDP-N-acetyl-alpha-D-muramoyl-L-alanyl-D-glutamate + ADP + phosphate + H(+). It functions in the pathway cell wall biogenesis; peptidoglycan biosynthesis. Its function is as follows. Cell wall formation. Catalyzes the addition of glutamate to the nucleotide precursor UDP-N-acetylmuramoyl-L-alanine (UMA). The chain is UDP-N-acetylmuramoylalanine--D-glutamate ligase from Streptococcus uberis (strain ATCC BAA-854 / 0140J).